The sequence spans 470 residues: Ribosomal protein uS12 methylthiotransferase RimO (470 aa).

An MTTase N-terminal domain is found at Pro-20–Ala-131. [4Fe-4S] cluster-binding residues include Cys-29, Cys-65, Cys-94, Cys-169, Cys-173, and Cys-176. The Radical SAM core domain occupies Thr-155–Ala-384. Positions Ala-387 to Ser-458 constitute a TRAM domain.

The protein belongs to the methylthiotransferase family. RimO subfamily. It depends on [4Fe-4S] cluster as a cofactor.

The protein localises to the cytoplasm. It carries out the reaction L-aspartate(89)-[ribosomal protein uS12]-hydrogen + (sulfur carrier)-SH + AH2 + 2 S-adenosyl-L-methionine = 3-methylsulfanyl-L-aspartate(89)-[ribosomal protein uS12]-hydrogen + (sulfur carrier)-H + 5'-deoxyadenosine + L-methionine + A + S-adenosyl-L-homocysteine + 2 H(+). Catalyzes the methylthiolation of an aspartic acid residue of ribosomal protein uS12. The protein is Ribosomal protein uS12 methylthiotransferase RimO of Synechococcus sp. (strain CC9311).